Consider the following 276-residue polypeptide: Large ribosomal subunit protein uL2 (276 aa).

A disordered region spans residues 213–264 (WLGRRPHNRGVVMNPVDHPHGGGEGRTSGGRHPVTPWGKPTKGYKTRTNKRT).

This sequence belongs to the universal ribosomal protein uL2 family. Part of the 50S ribosomal subunit. Forms a bridge to the 30S subunit in the 70S ribosome.

Its function is as follows. One of the primary rRNA binding proteins. Required for association of the 30S and 50S subunits to form the 70S ribosome, for tRNA binding and peptide bond formation. It has been suggested to have peptidyltransferase activity; this is somewhat controversial. Makes several contacts with the 16S rRNA in the 70S ribosome. The sequence is that of Large ribosomal subunit protein uL2 from Granulibacter bethesdensis (strain ATCC BAA-1260 / CGDNIH1).